A 374-amino-acid chain; its full sequence is Potassium channel subfamily K member 9 (374 aa).

The Cytoplasmic portion of the chain corresponds to 1 to 8 (MKRQNVRT). Residues 9–29 (LSLIICTFTYLLVGAAVFDAL) form a helical membrane-spanning segment. Residues 30–88 (ESDYEMREEEKLKAEEIRLKGKYNISSEDYRQLELVIMQSEPHRAGVQWKFAGSFYFAI) are Extracellular-facing. The N-linked (GlcNAc...) asparagine glycan is linked to asparagine 53. The segment at residues 89–101 (TVITTIGYGHAAP) is an intramembrane region (pore-forming). The Extracellular segment spans residues 102-107 (GTDAGK). A helical transmembrane segment spans residues 108-128 (AFCMFYAVLGIPLTLVMFQSL). Over 129-158 (GERMNTFVKYLLKRIKKCCGMHSTDVSMEN) the chain is Cytoplasmic. The helical transmembrane segment at 159 to 179 (MVTVGFFSCMGTLCIGAAAFS) threads the bilayer. Residues 180–194 (HYEEWSFFQAYYYCF) are Extracellular-facing. The segment at residues 195-207 (ITLTTIGFGDYVA) is an intramembrane region (pore-forming). The Extracellular segment spans residues 208–218 (LQKNRALQKKP). Residues 219-239 (LYVAFSFMYILVGLTVIGAFL) traverse the membrane as a helical segment. Over 240-374 (NLVVLRFLTM…HRLMKRRKSI (135 aa)) the chain is Cytoplasmic.

The protein belongs to the two pore domain potassium channel (TC 1.A.1.8) family. Homodimer. May form heterodimers with other family members.

It localises to the cell membrane. Functionally, pH-dependent, voltage-insensitive, background potassium channel protein. The chain is Potassium channel subfamily K member 9 (kcnk9) from Xenopus laevis (African clawed frog).